A 2353-amino-acid polypeptide reads, in one-letter code: Otogelin-like protein (2353 aa).

The first 31 residues, 1–31 (MNIVRKLNLMIPWSIFLLHVLLFSLQEYICA), serve as a signal peptide directing secretion. The VWFD 1 domain occupies 121 to 297 (GICKTWGQYH…VQTPDDTKCV (177 aa)). Cystine bridges form between cysteine 123/cysteine 257 and cysteine 145/cysteine 296. Asparagine 144 carries N-linked (GlcNAc...) asparagine glycosylation. The 54-residue stretch at 390–443 (CDDSFVHRDCISCCPPTCTFEKQCLGSNLHCLDGCYCPDGLVMDNGTCISLENC) folds into the TIL 1 domain. N-linked (GlcNAc...) asparagine glycosylation is found at asparagine 434 and asparagine 473. The 174-residue stretch at 481–654 (VQCSVVGDSH…NAWRVSSTCF (174 aa)) folds into the VWFD 2 domain. 3 disulfides stabilise this stretch: cysteine 483–cysteine 618, cysteine 505–cysteine 653, and cysteine 527–cysteine 535. Residues 745-800 (CQKGMLYHHCSSFCLHSCISLSSPEQCSDDCAEGCNCPEGKFYEDTLNFCVPIFHC) enclose the TIL 2 domain. Residues asparagine 826 and asparagine 876 are each glycosylated (N-linked (GlcNAc...) asparagine). Positions 946–1115 (AVCTIYGDRH…SWALGQCESP (170 aa)) constitute a VWFD 3 domain. Intrachain disulfides connect cysteine 948–cysteine 1078 and cysteine 992–cysteine 999. Residues asparagine 1289, asparagine 1604, and asparagine 2198 are each glycosylated (N-linked (GlcNAc...) asparagine). The VWFD 4 domain maps to 1534–1723 (CRCSMLSELS…SWEIEKSFEV (190 aa)). Cysteines 1536 and 1683 form a disulfide. Intrachain disulfides connect cysteine 2261/cysteine 2317, cysteine 2282/cysteine 2331, cysteine 2293/cysteine 2348, and cysteine 2297/cysteine 2350. The CTCK domain maps to 2261-2353 (CKREERICQK…EPIDCTCQWN (93 aa)).

The protein belongs to the otogelin family. As to expression, expressed at high levels in fetal inner ear and heart. Low levels in fetal skeletal muscle, kidney, spleen and colon. Not detected in fetal liver, lung, brain, nor in fetal stomach. In adult tissues, highest levels in brain, kidney, heart and retina. Relatively low levels in lung, spleen and duodenum. Not detected in adult skeletal muscle, liver, nor testis.

It localises to the secreted. This chain is Otogelin-like protein (OTOGL), found in Homo sapiens (Human).